The following is a 333-amino-acid chain: D-fructose 1,6-bisphosphatase class 2/sedoheptulose 1,7-bisphosphatase (333 aa).

Mn(2+) is bound by residues Asp33, Glu57, Asp85, and Glu88. Residues 88-90, Tyr119, 164-166, and 186-188 each bind substrate; these read EGT, RTR, and DGD. Position 213 (Glu213) interacts with Mn(2+).

Belongs to the FBPase class 2 family. In terms of assembly, homotetramer. It depends on Mn(2+) as a cofactor.

The catalysed reaction is beta-D-fructose 1,6-bisphosphate + H2O = beta-D-fructose 6-phosphate + phosphate. It catalyses the reaction D-sedoheptulose 1,7-bisphosphate + H2O = D-sedoheptulose 7-phosphate + phosphate. Its pathway is carbohydrate biosynthesis; Calvin cycle. Functionally, catalyzes the hydrolysis of fructose 1,6-bisphosphate (Fru 1,6-P2) and sedoheptulose 1,7-bisphosphate (Sed 1,7-P2) to fructose 6-phosphate and sedoheptulose 7-phosphate, respectively. The chain is D-fructose 1,6-bisphosphatase class 2/sedoheptulose 1,7-bisphosphatase from Prochlorococcus marinus (strain MIT 9301).